The chain runs to 510 residues: Propionyl-CoA carboxylase beta chain (510 aa).

Residues 1 to 257 form the CoA carboxyltransferase N-terminal domain; that stretch reads MKDILQELEN…SNRTPAPVRP (257 aa). Residues 1-504 form a carboxyltransferase region; that stretch reads MKDILQELEN…NKKLANPWKK (504 aa). Residues 264–504 form the CoA carboxyltransferase C-terminal domain; sequence RIEDSLDTLI…NKKLANPWKK (241 aa).

This sequence belongs to the AccD/PCCB family. In terms of assembly, probably a dodecamer composed of six biotin-containing alpha subunits and six beta subunits.

The catalysed reaction is propanoyl-CoA + hydrogencarbonate + ATP = (S)-methylmalonyl-CoA + ADP + phosphate + H(+). Its pathway is metabolic intermediate metabolism; propanoyl-CoA degradation; succinyl-CoA from propanoyl-CoA: step 1/3. This Cereibacter sphaeroides (strain ATCC 17023 / DSM 158 / JCM 6121 / CCUG 31486 / LMG 2827 / NBRC 12203 / NCIMB 8253 / ATH 2.4.1.) (Rhodobacter sphaeroides) protein is Propionyl-CoA carboxylase beta chain.